We begin with the raw amino-acid sequence, 123 residues long: MKAKLGFNRLSRKSSHRRALLKNMVISFLKHEKISSTKAKLFEVKRFSERLITKAKVDTVHNRRELSKFIHDKYILNKLFTKISPVFRQRSGGYTRMIKLGKRYGDAAEMAILELVEKPLKAE.

It belongs to the bacterial ribosomal protein bL17 family. As to quaternary structure, part of the 50S ribosomal subunit. Contacts protein L32.

The polypeptide is Large ribosomal subunit protein bL17 (Borreliella afzelii (strain PKo) (Borrelia afzelii)).